The sequence spans 108 residues: Iron-sulfur cluster assembly protein CyaY (108 aa).

The protein belongs to the frataxin family.

Its function is as follows. Involved in iron-sulfur (Fe-S) cluster assembly. May act as a regulator of Fe-S biogenesis. This is Iron-sulfur cluster assembly protein CyaY from Burkholderia orbicola (strain MC0-3).